The sequence spans 344 residues: AI-2 transport protein TqsA (344 aa).

Over 1–4 (MAKP) the chain is Cytoplasmic. Residues 5-25 (IITLNGLKIVIMLGMLVIILC) traverse the membrane as a helical segment. Over 26–30 (GIRFA) the chain is Periplasmic. Residues 31-51 (AEIIVPFILALFIAVILNPLV) form a helical membrane-spanning segment. The Cytoplasmic portion of the chain corresponds to 52 to 61 (QHMVRWRVPR). Residues 62–82 (VLAVSILMTIIVMAMVLLLAY) form a helical membrane-spanning segment. The Periplasmic portion of the chain corresponds to 83–149 (LGSALNELTR…LLTQLSNAMS (67 aa)). Residues 150–170 (SIFLLLLTVLFMLLEVPQLPG) traverse the membrane as a helical segment. Residues 171 to 196 (KFQQMMARPVEGMAAIQRAIDSVSHY) are Cytoplasmic-facing. Residues 197–217 (LVLKTAISIITGLVAWAMLAA) form a helical membrane-spanning segment. At 218–221 (LDVR) the chain is on the periplasmic side. A helical transmembrane segment spans residues 222-242 (FAFVWGLLAFALNYIPNIGSV). Over 243–257 (LAAIPPIAQVLVFNG) the chain is Cytoplasmic. Residues 258 to 278 (FYEALLVLAGYLLINLVFGNI) traverse the membrane as a helical segment. At 279–292 (LEPRIMGRGLGLST) the chain is on the periplasmic side. Residues 293–313 (LVVFLSLIFWGWLLGPVGMLL) traverse the membrane as a helical segment. Over 314–344 (SVPLTIIVKIALEQTAGGQSIAVLLSDLNKE) the chain is Cytoplasmic.

Belongs to the autoinducer-2 exporter (AI-2E) (TC 2.A.86) family.

Its subcellular location is the cell inner membrane. It carries out the reaction (2R,4S)-2-methyltetrahydrofuran-2,3,3,4-tetrol(in) = (2R,4S)-2-methyltetrahydrofuran-2,3,3,4-tetrol(out). Involved in the transport of the quorum-sensing signal autoinducer 2 (AI-2). Controls the transport of AI-2 either by enhancing its secretion or inhibiting its uptake and consequently represses biofilm formation and motility and affects the global gene expression in biofilms. The chain is AI-2 transport protein TqsA from Escherichia coli (strain K12).